We begin with the raw amino-acid sequence, 72 residues long: UPF0270 protein KPN78578_37030 (72 aa).

Belongs to the UPF0270 family.

The protein is UPF0270 protein KPN78578_37030 of Klebsiella pneumoniae subsp. pneumoniae (strain ATCC 700721 / MGH 78578).